The sequence spans 386 residues: 1-deoxy-D-xylulose 5-phosphate reductoisomerase (386 aa).

Residues T7, G8, S9, I10, A33, and N124 each contribute to the NADPH site. Position 125 (K125) interacts with 1-deoxy-D-xylulose 5-phosphate. Position 126 (E126) interacts with NADPH. Residue D148 participates in Mn(2+) binding. Residues S149, E150, S174, and H197 each coordinate 1-deoxy-D-xylulose 5-phosphate. A Mn(2+)-binding site is contributed by E150. G203 is a binding site for NADPH. Positions 210, 215, 216, and 219 each coordinate 1-deoxy-D-xylulose 5-phosphate. E219 lines the Mn(2+) pocket.

It belongs to the DXR family. Mg(2+) serves as cofactor. Requires Mn(2+) as cofactor.

It carries out the reaction 2-C-methyl-D-erythritol 4-phosphate + NADP(+) = 1-deoxy-D-xylulose 5-phosphate + NADPH + H(+). The protein operates within isoprenoid biosynthesis; isopentenyl diphosphate biosynthesis via DXP pathway; isopentenyl diphosphate from 1-deoxy-D-xylulose 5-phosphate: step 1/6. Functionally, catalyzes the NADPH-dependent rearrangement and reduction of 1-deoxy-D-xylulose-5-phosphate (DXP) to 2-C-methyl-D-erythritol 4-phosphate (MEP). This is 1-deoxy-D-xylulose 5-phosphate reductoisomerase from Kitasatospora griseola (Streptomyces griseolosporeus).